A 337-amino-acid chain; its full sequence is Fructose-1,6-bisphosphatase class 1 (337 aa).

Mg(2+) contacts are provided by E89, D112, L114, and D115. Substrate is bound by residues 115-118, N208, Y241, and K271; that span reads DGSS. E277 lines the Mg(2+) pocket.

It belongs to the FBPase class 1 family. As to quaternary structure, homotetramer. It depends on Mg(2+) as a cofactor.

It localises to the cytoplasm. It catalyses the reaction beta-D-fructose 1,6-bisphosphate + H2O = beta-D-fructose 6-phosphate + phosphate. It participates in carbohydrate biosynthesis; gluconeogenesis. The protein is Fructose-1,6-bisphosphatase class 1 of Yersinia pseudotuberculosis serotype O:1b (strain IP 31758).